Reading from the N-terminus, the 962-residue chain is Protease 3 (962 aa).

The N-terminal stretch at M1–A23 is a signal peptide. H88 is a binding site for Zn(2+). E91 serves as the catalytic Proton acceptor. Residues H92 and E169 each coordinate Zn(2+).

The protein belongs to the peptidase M16 family. In terms of assembly, monomer. Zn(2+) is required as a cofactor.

It localises to the periplasm. The enzyme catalyses Preferential cleavage of 16-Tyr-|-Leu-17 and 25-Phe-|-Tyr-26 bonds of oxidized insulin B chain. Also acts on other substrates of Mw less than 7 kDa such as insulin and glucagon.. Endopeptidase that degrades small peptides of less than 7 kDa, such as glucagon and insulin. This Escherichia coli (strain K12) protein is Protease 3 (ptrA).